The chain runs to 229 residues: Cytidylate kinase (229 aa).

Residue 7-15 (GPAGAGKSS) participates in ATP binding.

Belongs to the cytidylate kinase family. Type 1 subfamily.

It localises to the cytoplasm. It carries out the reaction CMP + ATP = CDP + ADP. It catalyses the reaction dCMP + ATP = dCDP + ADP. The sequence is that of Cytidylate kinase from Rhodopirellula baltica (strain DSM 10527 / NCIMB 13988 / SH1).